Reading from the N-terminus, the 980-residue chain is GPI inositol-deacylase (980 aa).

Residues 1–7 are Cytoplasmic-facing; it reads MFMFRNC. Residues 8-28 form a helical membrane-spanning segment; it reads AVLLVIGSICCFIYGLFRLHV. Over 29 to 628 the chain is Lumenal; that stretch reads EVEPNACRMT…EYSYSSALSR (600 aa). Ser-170 is a catalytic residue. N-linked (GlcNAc...) asparagine glycosylation is found at Asn-427, Asn-517, and Asn-596. Residues 629–649 form a helical membrane-spanning segment; it reads LVLEFYGWLPAHLVCVLLIVL. At 650-709 the chain is on the cytoplasmic side; the sequence is RKQVETFYDVGTFRSLRPYVGYLQYTSLYIVTACRLLKKLIISSRVFPEPEPLDYSINVS. A helical transmembrane segment spans residues 710–730; that stretch reads IVIHCAAIALSLLATLGTWLA. Over 731-774 the chain is Lumenal; it reads LTLYGNAFYRLALRITRLSQATSNVMISIMTHLPITYGILTIAT. The helical transmembrane segment at 775-795 threads the bilayer; the sequence is AMGTCSGVGLLLAFVFYFLML. Residues 796 to 867 are Cytoplasmic-facing; the sequence is SNAYKDYLED…CVGLQNFSFH (72 aa). The segment at 821 to 853 is disordered; it reads AVTEQEDATEEQNEEQNALKQNDEQKQQQQEEE. Positions 824-834 are enriched in acidic residues; it reads EQEDATEEQNE. The helical transmembrane segment at 868–888 threads the bilayer; that stretch reads VTLLLMLFVQLLLNAPSSLAW. The Lumenal segment spans residues 889-895; that stretch reads LRSRRHG. A helical transmembrane segment spans residues 896 to 916; sequence INLPDPSLYPSIVVLASLSLL. Residues 917–929 are Cytoplasmic-facing; sequence LQLRAPQKCQGYW. Residues 930-950 form a helical membrane-spanning segment; it reads MLSIAFYILAGVVLLYCQAAI. Over 951–954 the chain is Lumenal; it reads YRLT. The helical transmembrane segment at 955-975 threads the bilayer; that stretch reads YVIAGAFALLSAHQSLWILWG. Residues 976-980 lie on the Cytoplasmic side of the membrane; it reads RVSRV.

This sequence belongs to the GPI inositol-deacylase family.

Its subcellular location is the endoplasmic reticulum membrane. Its function is as follows. Involved in inositol deacylation of GPI-anchored proteins. The polypeptide is GPI inositol-deacylase (Drosophila melanogaster (Fruit fly)).